The sequence spans 533 residues: Neuropilin and tolloid-like protein 1 (533 aa).

An N-terminal signal peptide occupies residues 1 to 22 (MIYGRSLFHIIASLIILHSSGA). The Extracellular portion of the chain corresponds to 23-344 (TKKGTEKQIT…LDQLTNTSGT (322 aa)). 7 cysteine pairs are disulfide-bonded: C41–C68, C96–C118, C172–C202, C229–C251, C292–C304, C299–C317, and C311–C326. 2 CUB domains span residues 41 to 155 (CGTW…YNFT) and 172 to 287 (CEFE…FTSF). Residues 291–327 (PCEGNTFFCHSNMCINNTLVCNGLQNCVYPWDENHCK) enclose the LDL-receptor class A domain. N306 is a glycosylation site (N-linked (GlcNAc...) asparagine). An N-linked (GlcNAc...) asparagine glycan is attached at N340. The helical transmembrane segment at 345 to 365 (VIGVTSCIVIILIIVSVIVQI) threads the bilayer. Residues 366-533 (KQPRKKYVQR…HESEYNTTRV (168 aa)) lie on the Cytoplasmic side of the membrane. The residue at position 417 (Y417) is a Phosphotyrosine. Residues 531 to 533 (TRV) carry the PDZ-binding motif.

Interacts with PLZ domains of DLG2, DLG3 and DLG4 via its C-terminal TRV domain. Interacts with GRIN2A and GRIN2B via its CUB domains. Expressed only in brain. Present throughout the central nervous system. Highly expressed in the hippocampal CA3 region, olfactory bulb and tubercle, caudate putamen, and neocortex in the adult brain.

It localises to the membrane. The protein resides in the postsynaptic density membrane. In terms of biological role, involved in the development and/or maintenance of neuronal circuitry. Accessory subunit of the neuronal N-methyl-D-aspartate receptor (NMDAR) critical for maintaining the abundance of GRIN2A-containing NMDARs in the postsynaptic density. Regulates long-term NMDA receptor-dependent synaptic plasticity and cognition, at least in the context of spatial learning and memory. The polypeptide is Neuropilin and tolloid-like protein 1 (Neto1) (Mus musculus (Mouse)).